Reading from the N-terminus, the 447-residue chain is Na(+)-translocating NADH-quinone reductase subunit A (447 aa).

This sequence belongs to the NqrA family. In terms of assembly, composed of six subunits; NqrA, NqrB, NqrC, NqrD, NqrE and NqrF.

It catalyses the reaction a ubiquinone + n Na(+)(in) + NADH + H(+) = a ubiquinol + n Na(+)(out) + NAD(+). Its function is as follows. NQR complex catalyzes the reduction of ubiquinone-1 to ubiquinol by two successive reactions, coupled with the transport of Na(+) ions from the cytoplasm to the periplasm. NqrA to NqrE are probably involved in the second step, the conversion of ubisemiquinone to ubiquinol. The chain is Na(+)-translocating NADH-quinone reductase subunit A from Haemophilus influenzae (strain 86-028NP).